A 662-amino-acid polypeptide reads, in one-letter code: MKQFKLISDYKPSGDQGEAIKALSDGIIAGDKFQTLKGVTGSGKTFTMANIIQAVQKPTLIISHNKTLAAQLYREFKTFFPENAVEYFVSYYDYYQPEAYVPARDLYIEKDASINDEIDRLRLSATFSLMERRDVIVVSTVSCIYGLGLPESWRDLRITIEKGENIEIEKLKKQLISLQYERNDAVLERGRFRVKGDVMEIFPAYMEDAYRLEFDWEEIVRIRKFNPISGEVIQEYEELSIYPAKHFVMPEDAIPNALERIKKELEERLNVLNKEGKLLEAERLKTRTEYDIEMLSEMGYCPGIENYSAPIANRKPGEPPATLFHYFPDDFLLFMDESHVTFPQVGAMYEGDRSRKQNLVDFGFRLPCALDNRPLKIDEFEKMLNQAVFVSATPGPKEIKYSTRIVEQVIRPTGLLDPIIEIHKSEGQMEHIYGEVKKRIALNERSLILTLTKKMAEDLTDYLTGLGLKVKYIHSEVETIERVEILKGLRAGEFDVLIGINLLREGIDLPEVSFIGILDADKIGFLRSTTSLIQIVGRAARNENGKVVMYADRISDAMKETIEETNRRRAIQEAYNKEHGITPKTIKKAIEDILTRENEIKKEAALAEAGPLINSLNILNPADRKKLIKKLEAQMAEYADMLMFEEAAVIRDKIEEVKRIGS.

The 387-residue stretch at 25 to 411 folds into the Helicase ATP-binding domain; sequence DGIIAGDKFQ…STRIVEQVIR (387 aa). Residue 38 to 45 coordinates ATP; the sequence is GVTGSGKT. The short motif at 91–114 is the Beta-hairpin element; the sequence is YYDYYQPEAYVPARDLYIEKDASI. One can recognise a Helicase C-terminal domain in the interval 428 to 594; that stretch reads QMEHIYGEVK…TIKKAIEDIL (167 aa). In terms of domain architecture, UVR spans 625–660; that stretch reads KKLIKKLEAQMAEYADMLMFEEAAVIRDKIEEVKRI.

This sequence belongs to the UvrB family. In terms of assembly, forms a heterotetramer with UvrA during the search for lesions. Interacts with UvrC in an incision complex.

The protein resides in the cytoplasm. The UvrABC repair system catalyzes the recognition and processing of DNA lesions. A damage recognition complex composed of 2 UvrA and 2 UvrB subunits scans DNA for abnormalities. Upon binding of the UvrA(2)B(2) complex to a putative damaged site, the DNA wraps around one UvrB monomer. DNA wrap is dependent on ATP binding by UvrB and probably causes local melting of the DNA helix, facilitating insertion of UvrB beta-hairpin between the DNA strands. Then UvrB probes one DNA strand for the presence of a lesion. If a lesion is found the UvrA subunits dissociate and the UvrB-DNA preincision complex is formed. This complex is subsequently bound by UvrC and the second UvrB is released. If no lesion is found, the DNA wraps around the other UvrB subunit that will check the other stand for damage. The chain is UvrABC system protein B from Treponema denticola (strain ATCC 35405 / DSM 14222 / CIP 103919 / JCM 8153 / KCTC 15104).